We begin with the raw amino-acid sequence, 633 residues long: DNA mismatch repair protein MutL (633 aa).

Disordered regions lie at residues 337-364 (RPDDQLAPPGATSLTEPRPTGAAAGEFG) and 383-405 (VGWSGGSSASGGSSGYSAYTRPE). Residues 385–396 (WSGGSSASGGSS) are compositionally biased toward gly residues.

The protein belongs to the DNA mismatch repair MutL/HexB family.

Its function is as follows. This protein is involved in the repair of mismatches in DNA. It is required for dam-dependent methyl-directed DNA mismatch repair. May act as a 'molecular matchmaker', a protein that promotes the formation of a stable complex between two or more DNA-binding proteins in an ATP-dependent manner without itself being part of a final effector complex. This chain is DNA mismatch repair protein MutL, found in Pseudomonas aeruginosa (strain LESB58).